Consider the following 1142-residue polypeptide: Fibronectin type-III domain-containing protein 3A (1142 aa).

Residues 104–191 form a disordered region; that stretch reads YGDVDAHSTH…KSGKGKGGTQ (88 aa). The segment covering 107–145 has biased composition (basic and acidic residues); the sequence is VDAHSTHGRSNFRDERSSKTYERLQKKLKDRQGTQKDKM. The span at 146–158 shows a compositional bias: low complexity; that stretch reads SSPPSSPQKCPSP. Phosphoserine is present on residues Ser-147, Ser-151, and Ser-157. 9 consecutive Fibronectin type-III domains span residues 212 to 313, 317 to 409, 413 to 506, 510 to 604, 608 to 701, 705 to 795, 805 to 894, 895 to 989, and 990 to 1095; these read NIVK…TLSC, IPNP…TSGC, MPAS…TCPD, IPVK…TPAV, PCLP…TAPG, QCKP…TPPS, EISD…TKPL, PPDP…TPKS, and VPAA…TEPP. Lys-328 bears the N6-acetyllysine mark. A helical membrane pass occupies residues 1121–1141; it reads NLVLFAFFSILIAFIIQYFVI.

It belongs to the FNDC3 family.

It localises to the golgi apparatus membrane. In terms of biological role, mediates spermatid-Sertoli adhesion during spermatogenesis. In Pongo abelii (Sumatran orangutan), this protein is Fibronectin type-III domain-containing protein 3A (FNDC3A).